The chain runs to 544 residues: Cytochrome P450 monooxygenase tenB (544 aa).

A helical transmembrane segment spans residues 13 to 33 (LGYYEKVTGILGVVSIILLFW). Basic and acidic residues predominate over residues 438-448 (FDPFRFSRASK). The interval 438 to 467 (FDPFRFSRASKDDDDDDDDDGRSTSSHTKD) is disordered. Cysteine 486 contributes to the heme binding site.

Belongs to the cytochrome P450 family. The cofactor is heme.

The protein resides in the membrane. The protein operates within secondary metabolite biosynthesis. In terms of biological role, cytochrome P450 monooxygenase; part of the gene cluster that mediates the biosynthesis of tenellin-type 2-pyridones, iron-chelating compounds involved in iron stress tolerance, competition with the natural competitor fungus Metarhizium robertsii and insect hosts infection. TenB catalyzes the selective N-hydroxylation of the 2-pyridone nitrogen of yield tellinin and 15-hydroxytellenin (15-HT), respectively. The pathway begins with the assembly of the polyketide-amino acid backbone by the hybrid PKS-NRPS tenS with the help of the enoyl reductase tenC. These enzymes catalyze the synthesis of the pyrrolidine-2-dione intermediates pretellinin A, 11-hydropretellenin A, 12-hydropretellenin A, 13-hydropretellenin A, 14-hydropretellenin A, 12-oxopretellenin A and prototellinin D. The cytochrome P450 monooxygenase tenA then catalyzes an oxidative ring expansion of pretenellin A and 14-hydropretellenin A to form the 2-pyridone core, leading to pretenellin B and pyridovericin, respectively. The cytochrome P450 monooxygenase tenB is then required for the selective N-hydroxylation of the 2-pyridone nitrogen of yield tellinin and 15-hydroxytellenin (15-HT), respectively. The UDP-glucosyltransferase GT1 and the methyltransferase MT1, located outside the tenS gene cluster, contribute to the stepwise glycosylation and methylation of 15-HT to obtain the glycoside pyridovericin-N-O-(4-O-methyl-beta-D-glucopyranoside) (PMGP). Additional related compounds such as 1-O-methyl-15-HT, (8Z)-1-O-methyl-15-HT, and O-methyltenellin A are also produced but the enzymes involved in their biosynthesis have still to be determined. This is Cytochrome P450 monooxygenase tenB from Beauveria bassiana (strain ARSEF 2860) (White muscardine disease fungus).